The following is a 199-amino-acid chain: SCO2-like protein RC0042 (199 aa).

Belongs to the SCO1/2 family.

The polypeptide is SCO2-like protein RC0042 (Rickettsia conorii (strain ATCC VR-613 / Malish 7)).